The sequence spans 536 residues: SNW domain-containing protein 1 (536 aa).

The segment at 1-44 (MALTSFLPAPTQLSQDQLEAEERARSQRSLQTSLVSSRREPPPY) is disordered. The residue at position 2 (Ala2) is an N-acetylalanine. The residue at position 14 (Ser14) is a Phosphoserine. Over residues 27–36 (QRSLQTSLVS) the composition is skewed to polar residues. The interval 59–79 (GDGGAFPEIHVAQYPLDMGRK) is interaction with PPIL1. Glycyl lysine isopeptide (Lys-Gly) (interchain with G-Cter in SUMO2) cross-links involve residues Lys81, Lys97, Lys115, Lys122, Lys141, Lys158, and Lys170. Positions 174-339 (AQYIRYTPSQ…KARERRAGIK (166 aa)) are SNW. Phosphoserine is present on residues Ser182 and Ser190. Residue Lys193 forms a Glycyl lysine isopeptide (Lys-Gly) (interchain with G-Cter in SUMO2) linkage. Residues 212–233 (FKINKKIPRGPPSPPAPVMHSP) form a disordered region. 3 positions are modified to phosphoserine: Ser224, Ser232, and Ser234. Glycyl lysine isopeptide (Lys-Gly) (interchain with G-Cter in SUMO2) cross-links involve residues Lys240, Lys258, Lys286, Lys339, Lys344, Lys416, and Lys441. The interval 311–386 (KMAQKEKEKH…RSKLQRNENR (76 aa)) is disordered. Ser446 carries the phosphoserine modification. Lys452 is covalently cross-linked (Glycyl lysine isopeptide (Lys-Gly) (interchain with G-Cter in SUMO2)). Basic and acidic residues-rich tracts occupy residues 467-489 (IKTNRFVPDKEFSGSDRKQRGRE) and 503-530 (KFLEEAKQHGGSKRPSDSSRPKEHEHEG). Residues 467–536 (IKTNRFVPDK…EHEGKKRRKE (70 aa)) are disordered. Phosphoserine is present on residues Ser479 and Ser481. A Glycyl lysine isopeptide (Lys-Gly) (interchain with G-Cter in SUMO2) cross-link involves residue Lys509.

Belongs to the SNW family. As to quaternary structure, identified in the spliceosome C complex. Associates with U4/U6-U5 tri-small nuclear ribonucleoproteins (U4/U6-U5 tri-snRNPs). Component of the minor spliceosome, which splices U12-type introns. Interacts with SKI, SMAD2,SMAD3, RBPJ, RB1, PABPN1, MAGEA1, SIRT1, FOXN3, U2AF2, PPIL1, DAXX and ATP1B4. Interacts with VDR and RXRA; preferentially associates with VDR:RXRA heterodimers. Interacts with NCOR2. Interacts with MAML1. Interacts with NOTCH1 NICD; the interaction involves multimerized NOTCH1 NICD. Forms a complex with NOTCH1 NICD and MAML1; the association is dissociated by RBPJ. Associates with positive transcription elongation factor b (P-TEFb). Component of the SNARP complex which consists at least of SNIP1, SNW1, THRAP3, BCLAF1 and PNN.

Its subcellular location is the nucleus. Functionally, involved in pre-mRNA splicing as component of the spliceosome. As a component of the minor spliceosome, involved in the splicing of U12-type introns in pre-mRNAs. Required in the specific splicing of CDKN1A pre-mRNA; the function probably involves the recruitment of U2AF2 to the mRNA. May recruit PPIL1 to the spliceosome. May be involved in cyclin-D1/CCND1 mRNA stability through the SNARP complex which associates with both the 3'end of the CCND1 gene and its mRNA. Involved in transcriptional regulation. Modulates TGF-beta-mediated transcription via association with SMAD proteins, MYOD1-mediated transcription via association with PABPN1, RB1-mediated transcriptional repression, and retinoid-X receptor (RXR)- and vitamin D receptor (VDR)-dependent gene transcription in a cell line-specific manner probably involving coactivators NCOA1 and GRIP1. Is involved in NOTCH1-mediated transcriptional activation. Binds to multimerized forms of Notch intracellular domain (NICD) and is proposed to recruit transcriptional coactivators such as MAML1 to form an intermediate preactivation complex which associates with DNA-bound CBF-1/RBPJ to form a transcriptional activation complex by releasing SNW1 and redundant NOTCH1 NICD. In Mus musculus (Mouse), this protein is SNW domain-containing protein 1 (Snw1).